The primary structure comprises 321 residues: MRAAINRANSLGGLFSFRFIRNIKSMSSSTSQDFVSRPVIKKVFAKLQKEGDGAVVRRGISRSEQKLLDPFLMLDEFSVSPPAGFPDHPHRGFETVTYVLEGGITHQDFKGHKGTIYAGDVQWMTAGRGIIHSEMPEEEVNKGLQLWINLSSNEKMIEPNYQELSHSDIPKAEQNGVEVKVIAGESMGIQSPVYTRTPTMFLDFTLQPGAQIHQNVPESWNAFAYILESGEGGGVFSSSNSSPIPAHSVVVFGPGNDGVSVWNKSSSKQLRFVLIAGEPIGEPVVQYGPFVMNTQAEIDMTIEDYHYGKNGFEMAKYWRSQ.

The Fe cation site is built by His-88, His-90, His-132, and Glu-134.

Belongs to the pirin family. Interacts with RD21A, RD21B and XCP2.

It is found in the cytoplasm. Its subcellular location is the cytosol. The protein localises to the nucleus. Its function is as follows. Involved in susceptibility to the bacterial plant pathogen Ralstonia solanacearum. Stabilizes the xylem cysteine protease XCP2 by blocking its autolysis. In Arabidopsis thaliana (Mouse-ear cress), this protein is Pirin-like protein 2.